Here is a 484-residue protein sequence, read N- to C-terminus: Glutamate--tRNA ligase (484 aa).

Residues 11–21 (PSPTGYLHIGN) carry the 'HIGH' region motif. Positions 252–256 (KLSKR) match the 'KMSKS' region motif. Lys-255 contributes to the ATP binding site.

Belongs to the class-I aminoacyl-tRNA synthetase family. Glutamate--tRNA ligase type 1 subfamily. Monomer.

Its subcellular location is the cytoplasm. The enzyme catalyses tRNA(Glu) + L-glutamate + ATP = L-glutamyl-tRNA(Glu) + AMP + diphosphate. Catalyzes the attachment of glutamate to tRNA(Glu) in a two-step reaction: glutamate is first activated by ATP to form Glu-AMP and then transferred to the acceptor end of tRNA(Glu). The chain is Glutamate--tRNA ligase from Staphylococcus aureus (strain COL).